We begin with the raw amino-acid sequence, 294 residues long: 1,4-dihydroxy-2-naphthoate octaprenyltransferase (294 aa).

Transmembrane regions (helical) follow at residues 35 to 55 (SAVW…VIGV), 103 to 123 (AGLA…ATCI), 140 to 160 (GFGE…GTEY), 166 to 186 (VDWV…SVLV), 220 to 240 (LLVA…WCAV), and 272 to 292 (GLAM…AGSV).

The protein belongs to the MenA family. Type 1 subfamily.

The protein localises to the cell membrane. The catalysed reaction is an all-trans-polyprenyl diphosphate + 1,4-dihydroxy-2-naphthoate + H(+) = a 2-demethylmenaquinol + CO2 + diphosphate. It participates in quinol/quinone metabolism; menaquinone biosynthesis; menaquinol from 1,4-dihydroxy-2-naphthoate: step 1/2. Its function is as follows. Conversion of 1,4-dihydroxy-2-naphthoate (DHNA) to demethylmenaquinone (DMK). This chain is 1,4-dihydroxy-2-naphthoate octaprenyltransferase, found in Mycobacterium leprae (strain TN).